A 396-amino-acid polypeptide reads, in one-letter code: NADH-quinone oxidoreductase subunit D (396 aa).

Belongs to the complex I 49 kDa subunit family. As to quaternary structure, NDH-1 is composed of 14 different subunits. Subunits NuoB, C, D, E, F, and G constitute the peripheral sector of the complex.

The protein localises to the cell inner membrane. The enzyme catalyses a quinone + NADH + 5 H(+)(in) = a quinol + NAD(+) + 4 H(+)(out). Its function is as follows. NDH-1 shuttles electrons from NADH, via FMN and iron-sulfur (Fe-S) centers, to quinones in the respiratory chain. The immediate electron acceptor for the enzyme in this species is believed to be ubiquinone. Couples the redox reaction to proton translocation (for every two electrons transferred, four hydrogen ions are translocated across the cytoplasmic membrane), and thus conserves the redox energy in a proton gradient. The protein is NADH-quinone oxidoreductase subunit D of Orientia tsutsugamushi (strain Boryong) (Rickettsia tsutsugamushi).